Here is a 564-residue protein sequence, read N- to C-terminus: Proline--tRNA ligase (564 aa).

Belongs to the class-II aminoacyl-tRNA synthetase family. ProS type 1 subfamily. As to quaternary structure, homodimer.

It is found in the cytoplasm. It catalyses the reaction tRNA(Pro) + L-proline + ATP = L-prolyl-tRNA(Pro) + AMP + diphosphate. In terms of biological role, catalyzes the attachment of proline to tRNA(Pro) in a two-step reaction: proline is first activated by ATP to form Pro-AMP and then transferred to the acceptor end of tRNA(Pro). As ProRS can inadvertently accommodate and process non-cognate amino acids such as alanine and cysteine, to avoid such errors it has two additional distinct editing activities against alanine. One activity is designated as 'pretransfer' editing and involves the tRNA(Pro)-independent hydrolysis of activated Ala-AMP. The other activity is designated 'posttransfer' editing and involves deacylation of mischarged Ala-tRNA(Pro). The misacylated Cys-tRNA(Pro) is not edited by ProRS. The polypeptide is Proline--tRNA ligase (Xylella fastidiosa (strain 9a5c)).